A 631-amino-acid polypeptide reads, in one-letter code: Clathrin interactor 1 (631 aa).

In terms of domain architecture, ENTH spans 24 to 157 (NVVMNYSEIE…QDDDRLREER (134 aa)). Residue arginine 37 coordinates a 1,2-diacyl-sn-glycero-3-phospho-(1D-myo-inositol-4,5-bisphosphate). An interaction with VTI1B region spans residues 60-62 (FMY). Arginine 75 is an a 1,2-diacyl-sn-glycero-3-phospho-(1D-myo-inositol-4,5-bisphosphate) binding site. 2 interaction with VTI1B regions span residues 102–104 (SER) and 150–161 (DDRLREERKKAK). 7 positions are modified to phosphoserine: serine 171, serine 174, serine 213, serine 218, serine 235, serine 253, and serine 307. Residues 227 to 339 (FRRKDREDSP…SSGDLVDLFD (113 aa)) are disordered. Basic and acidic residues predominate over residues 230–247 (KDREDSPERCSDSDEEKK). Residues 308 to 318 (PDQNASTHTPQ) show a composition bias toward polar residues. Phosphothreonine is present on threonine 316. Residues 319 to 331 (SSAKPSVPSSKSS) are compositionally biased toward low complexity. Phosphoserine is present on residues serine 320 and serine 630.

Belongs to the epsin family. As to quaternary structure, binds clathrin heavy chain and AP-2. Interacts with VTI1B. Interacts with GGA2 (via GAE domain). Interacts with AP1G1 (via GAE domain). Interacts with AP1G2 (via GAE domain).

Its subcellular location is the cytoplasm. The protein resides in the perinuclear region. The protein localises to the membrane. It is found in the cytoplasmic vesicle. It localises to the clathrin-coated vesicle. Binds to membranes enriched in phosphatidylinositol 4,5-bisphosphate (PtdIns(4,5)P2). May have a role in transport via clathrin-coated vesicles from the trans-Golgi network to endosomes. Stimulates clathrin assembly. This Mus musculus (Mouse) protein is Clathrin interactor 1 (Clint1).